Reading from the N-terminus, the 327-residue chain is GMP reductase (327 aa).

The Thioimidate intermediate role is filled by Cys176. 205–228 contacts NADP(+); that stretch reads IIADGGIRTHGDIAKSIRFGASMV.

Belongs to the IMPDH/GMPR family. GuaC type 2 subfamily.

It catalyses the reaction IMP + NH4(+) + NADP(+) = GMP + NADPH + 2 H(+). Functionally, catalyzes the irreversible NADPH-dependent deamination of GMP to IMP. It functions in the conversion of nucleobase, nucleoside and nucleotide derivatives of G to A nucleotides, and in maintaining the intracellular balance of A and G nucleotides. This Streptococcus pyogenes serotype M49 (strain NZ131) protein is GMP reductase.